A 513-amino-acid polypeptide reads, in one-letter code: Nitrogenase molybdenum-iron protein beta chain (513 aa).

Positions 70, 95, and 153 each coordinate [8Fe-7S] cluster.

It belongs to the NifD/NifK/NifE/NifN family. As to quaternary structure, tetramer of two alpha and two beta chains. Forms complex with the iron protein (nitrogenase component 2). [8Fe-7S] cluster is required as a cofactor.

The catalysed reaction is N2 + 8 reduced [2Fe-2S]-[ferredoxin] + 16 ATP + 16 H2O = H2 + 8 oxidized [2Fe-2S]-[ferredoxin] + 2 NH4(+) + 16 ADP + 16 phosphate + 6 H(+). In terms of biological role, this molybdenum-iron protein is part of the nitrogenase complex that catalyzes the key enzymatic reactions in nitrogen fixation. In Sinorhizobium fredii (strain NBRC 101917 / NGR234), this protein is Nitrogenase molybdenum-iron protein beta chain (nifK1).